The primary structure comprises 161 residues: RNA pyrophosphohydrolase (161 aa).

In terms of domain architecture, Nudix hydrolase spans 12–154 (PYRPGVGMMI…KRKLYQAVVK (143 aa)). A Nudix box motif is present at residues 46–67 (GGIVPGETPSIAAMREMLEEIG).

This sequence belongs to the Nudix hydrolase family. RppH subfamily. A divalent metal cation serves as cofactor.

In terms of biological role, accelerates the degradation of transcripts by removing pyrophosphate from the 5'-end of triphosphorylated RNA, leading to a more labile monophosphorylated state that can stimulate subsequent ribonuclease cleavage. The chain is RNA pyrophosphohydrolase from Rickettsia typhi (strain ATCC VR-144 / Wilmington).